Here is a 105-residue protein sequence, read N- to C-terminus: Small ribosomal subunit protein uS10c (105 aa).

The protein belongs to the universal ribosomal protein uS10 family. As to quaternary structure, part of the 30S ribosomal subunit.

It localises to the plastid. The protein resides in the chloroplast. Its function is as follows. Involved in the binding of tRNA to the ribosomes. The polypeptide is Small ribosomal subunit protein uS10c (Pyropia yezoensis (Susabi-nori)).